Reading from the N-terminus, the 598-residue chain is Arginine--tRNA ligase (598 aa).

A 'HIGH' region motif is present at residues 131–141; it reads ANPTGPMHVGH. A disordered region spans residues 288-309; the sequence is KLPPPKSKKGQPPPQPQPDEEG.

Belongs to the class-I aminoacyl-tRNA synthetase family. As to quaternary structure, monomer.

Its subcellular location is the cytoplasm. The catalysed reaction is tRNA(Arg) + L-arginine + ATP = L-arginyl-tRNA(Arg) + AMP + diphosphate. The polypeptide is Arginine--tRNA ligase (Anaeromyxobacter dehalogenans (strain 2CP-1 / ATCC BAA-258)).